The chain runs to 283 residues: Demethylrebeccamycin-D-glucose O-methyltransferase (283 aa).

S-adenosyl-L-methionine contacts are provided by residues Ser101, Gln106, 129–130, Leu146, and His151; that span reads DA.

Belongs to the methyltransferase superfamily. In terms of assembly, monomer.

It catalyses the reaction 4'-demethylrebeccamycin + S-adenosyl-L-methionine = rebeccamycin + S-adenosyl-L-homocysteine + H(+). In terms of biological role, glycosyl O-methyltransferase that catalyzes the final step in the biosynthesis of rebeccamycin, an indolocarbazole alkaloid that inhibits topoisomerase 1. Has broad substrate specificity and functions as glycosyl O-methyltransferase on a number of rebeccamycin analogs. The sequence is that of Demethylrebeccamycin-D-glucose O-methyltransferase (rebM) from Lentzea aerocolonigenes (Lechevalieria aerocolonigenes).